The chain runs to 314 residues: 2-methoxy-6-polyprenyl-1,4-benzoquinol methylase, mitochondrial (314 aa).

The transit peptide at 1–19 (MLQSLNRSVRYLSTSIGSR) directs the protein to the mitochondrion. Residues threonine 109, aspartate 154, 186-187 (NS), and serine 203 contribute to the S-adenosyl-L-methionine site.

This sequence belongs to the class I-like SAM-binding methyltransferase superfamily. MenG/UbiE family. As to quaternary structure, component of a multi-subunit COQ enzyme complex.

Its subcellular location is the mitochondrion inner membrane. The catalysed reaction is a 2-methoxy-6-(all-trans-polyprenyl)benzene-1,4-diol + S-adenosyl-L-methionine = a 5-methoxy-2-methyl-3-(all-trans-polyprenyl)benzene-1,4-diol + S-adenosyl-L-homocysteine + H(+). The protein operates within cofactor biosynthesis; ubiquinone biosynthesis. Functionally, methyltransferase required for the conversion of 2-polyprenyl-6-methoxy-1,4-benzoquinol (DDMQH2) to 2-polyprenyl-3-methyl-6-methoxy-1,4-benzoquinol (DMQH2). The protein is 2-methoxy-6-polyprenyl-1,4-benzoquinol methylase, mitochondrial of Dictyostelium discoideum (Social amoeba).